A 142-amino-acid polypeptide reads, in one-letter code: Small heat shock protein IbpB (142 aa).

In terms of domain architecture, sHSP spans 26 to 137 (AGESQSFPPY…AAQRIAISER (112 aa)).

The protein belongs to the small heat shock protein (HSP20) family. Homodimer. Forms homomultimers of about 100-150 subunits at optimal growth temperatures. Conformation changes to oligomers at high temperatures or high ionic concentrations. The decrease in size of the multimers is accompanied by an increase in chaperone activity.

Its subcellular location is the cytoplasm. Associates with aggregated proteins, together with IbpA, to stabilize and protect them from irreversible denaturation and extensive proteolysis during heat shock and oxidative stress. Aggregated proteins bound to the IbpAB complex are more efficiently refolded and reactivated by the ATP-dependent chaperone systems ClpB and DnaK/DnaJ/GrpE. Its activity is ATP-independent. This is Small heat shock protein IbpB from Shigella flexneri serotype 5b (strain 8401).